Reading from the N-terminus, the 554-residue chain is Hydroxylamine reductase (554 aa).

The [2Fe-2S] cluster site is built by Cys-3, Cys-6, Cys-18, and Cys-25. Residues His-252, Glu-276, Cys-320, Cys-408, Cys-436, Cys-461, Glu-495, and Lys-497 each contribute to the hybrid [4Fe-2O-2S] cluster site. Cys-408 bears the Cysteine persulfide mark.

This sequence belongs to the HCP family. It depends on [2Fe-2S] cluster as a cofactor. Hybrid [4Fe-2O-2S] cluster serves as cofactor.

The protein localises to the cytoplasm. It catalyses the reaction A + NH4(+) + H2O = hydroxylamine + AH2 + H(+). Functionally, catalyzes the reduction of hydroxylamine to form NH(3) and H(2)O. The sequence is that of Hydroxylamine reductase from Shewanella sp. (strain MR-4).